The following is a 137-amino-acid chain: SMR2 protein (137 aa).

Residues 1 to 18 (MLVVLLTAALLALSSAQN) form the signal peptide. Residues 14 to 113 (SSAQNTDEEV…LHHRENLRPQ (100 aa)) are disordered. Over residues 75-85 (QQQQPLPVENQ) the composition is skewed to low complexity. Basic and acidic residues predominate over residues 99-110 (PPPETLHHRENL).

It is found in the secreted. In terms of biological role, unknown, male-specific function. The chain is SMR2 protein (Smr2) from Rattus norvegicus (Rat).